Reading from the N-terminus, the 801-residue chain is Disks large homolog 4 (801 aa).

Positions 4-60 (KREDTERALQAMEACQSAGDEGFRTRAERLLTIFQSDLFQALLDIQEFYELTVFENQ) constitute an L27 domain. PDZ domains lie at 153-240 (EITL…LRHK) and 248-335 (ELKL…AKTL). A disordered region spans residues 339 to 373 (HHQDAYNPPDITSSYSPHMDMSDYPQALSPSSPRR). Residues 393–474 (RVVIHRGSTG…TVTIITQYRP (82 aa)) enclose the PDZ 3 domain. The SH3 domain maps to 507 to 577 (KRSFFIRALF…PSKRRVERKE (71 aa)). The Guanylate kinase-like domain maps to 610–786 (ARPVIILGPS…IYHHVKSVIE (177 aa)).

It belongs to the MAGUK family. In terms of processing, ubiquitinated by MDM2 in response to NMDA receptor activation, leading to proteasome-mediated degradation of DLG4 which is required for AMPA receptor endocytosis. Post-translationally, palmitoylated. Palmitoylation is required for targeting to postsynaptic density, plasma membrane and synapses.

Its subcellular location is the cell membrane. The protein localises to the postsynaptic density. It is found in the synapse. Functionally, postsynaptic scaffolding protein that plays a critical role in synaptogenesis and synaptic plasticity by providing a platform for the postsynaptic clustering of crucial synaptic proteins. The protein is Disks large homolog 4 (dlg4) of Danio rerio (Zebrafish).